We begin with the raw amino-acid sequence, 321 residues long: Sideroflexin-3 (321 aa).

Met1 is subject to N-acetylmethionine. 4 helical membrane passes run Leu146–Leu164, Leu174–Leu194, Ile225–Val245, and Leu266–Phe286.

The protein belongs to the sideroflexin family.

The protein resides in the mitochondrion membrane. It carries out the reaction L-serine(in) = L-serine(out). In terms of biological role, mitochondrial serine transporter that mediates transport of serine into mitochondria, an important step of the one-carbon metabolism pathway. Mitochondrial serine is converted to glycine and formate, which then exits to the cytosol where it is used to generate the charged folates that serve as one-carbon donors. This chain is Sideroflexin-3 (Sfxn3), found in Rattus norvegicus (Rat).